The chain runs to 337 residues: 2-oxoglutarate-Fe(II) type oxidoreductase (337 aa).

One can recognise a Fe2OG dioxygenase domain in the interval 179 to 282; it reads AIATLRYLHY…RYSIPFFFTG (104 aa). 3 residues coordinate Fe cation: histidine 205, aspartate 207, and histidine 263. Residue arginine 273 participates in 2-oxoglutarate binding.

The protein belongs to the iron/ascorbate-dependent oxidoreductase family. Fe(2+) serves as cofactor. In terms of tissue distribution, endocrocin is specifically produced in conidia.

It functions in the pathway secondary metabolite biosynthesis. Its function is as follows. 2-oxoglutarate-Fe(II) type oxidoreductase; part of the gene cluster that mediates the biosynthesis of endocrocin, a simple anthraquinone interesting for many biotechnological applications. The pathway begins with the synthesis of atrochrysone thioester by the polyketide synthase (PKS) encA. The atrochrysone carboxyl ACP thioesterase encB then breaks the thioester bond and releases the atrochrysone carboxylic acid from encA. The atrochrysone carboxylic acid is then converted to endocrocin anthrone which is further oxidized into endocrocin by encC. The exact function of encD has not been identified yet, but it negatively regulates endocrocin production, likely through the modification of endocrocin itself. The chain is 2-oxoglutarate-Fe(II) type oxidoreductase from Aspergillus fumigatus (strain ATCC MYA-4609 / CBS 101355 / FGSC A1100 / Af293) (Neosartorya fumigata).